A 412-amino-acid chain; its full sequence is tRNA (guanine-N(7)-)-methyltransferase non-catalytic subunit WDR4 (412 aa).

An N-acetylalanine modification is found at alanine 2. WD repeat units follow at residues 3 to 40 (GSVG…IYDC), 50 to 90 (NKGE…LFRT), 94 to 131 (QCLS…SFSV), 137 to 174 (CGRL…VSWA), 180 to 218 (IESF…LWEY), 230 to 273 (ASLQ…IFQL), and 319 to 373 (PVGD…SYLK). The interval 377-412 (ERLQQQLEKKQRRRSPPPGPDGHAKKMRPGEATLSC) is disordered. 2 positions are modified to phosphoserine: serine 391 and serine 411.

Belongs to the WD repeat TRM82 family. In terms of assembly, non-catalytic component of the METTL1-WDR4 complex, composed of METTL1 and WDR4. Interacts with FEN1; the interaction is direct.

It localises to the nucleus. The protein resides in the chromosome. Its pathway is tRNA modification; N(7)-methylguanine-tRNA biosynthesis. In terms of biological role, non-catalytic component of the METTL1-WDR4 methyltransferase complex required for the formation of N(7)-methylguanine in a subset of RNA species, such as tRNAs, mRNAs and microRNAs (miRNAs). In the METTL1-WDR4 methyltransferase complex, WDR4 acts as a scaffold for tRNA-binding. Required for the formation of N(7)-methylguanine at position 46 (m7G46) in a large subset of tRNAs that contain the 5'-RAGGU-3' motif within the variable loop. M7G46 interacts with C13-G22 in the D-loop to stabilize tRNA tertiary structure and protect tRNAs from decay. Also required for the formation of N(7)-methylguanine at internal sites in a subset of mRNAs. Also required for methylation of a specific subset of miRNAs, such as let-7. Independently of METTL1, also plays a role in genome stability: localizes at the DNA replication site and regulates endonucleolytic activities of FEN1. The polypeptide is tRNA (guanine-N(7)-)-methyltransferase non-catalytic subunit WDR4 (Homo sapiens (Human)).